Here is a 772-residue protein sequence, read N- to C-terminus: DNA ligase (772 aa).

NAD(+) contacts are provided by residues 80–84 (DAEYD), 130–131 (SL), and Glu-160. The active-site N6-AMP-lysine intermediate is Lys-162. NAD(+) is bound by residues Arg-183, Glu-220, Lys-336, and Lys-360. Cys-454, Cys-457, Cys-473, and Cys-479 together coordinate Zn(2+). Residues 685–772 (APEQTLEGLT…NGPQGITTIG (88 aa)) enclose the BRCT domain.

It belongs to the NAD-dependent DNA ligase family. LigA subfamily. Mg(2+) serves as cofactor. Mn(2+) is required as a cofactor.

The catalysed reaction is NAD(+) + (deoxyribonucleotide)n-3'-hydroxyl + 5'-phospho-(deoxyribonucleotide)m = (deoxyribonucleotide)n+m + AMP + beta-nicotinamide D-nucleotide.. DNA ligase that catalyzes the formation of phosphodiester linkages between 5'-phosphoryl and 3'-hydroxyl groups in double-stranded DNA using NAD as a coenzyme and as the energy source for the reaction. It is essential for DNA replication and repair of damaged DNA. The protein is DNA ligase of Cutibacterium acnes (strain DSM 16379 / KPA171202) (Propionibacterium acnes).